A 358-amino-acid chain; its full sequence is Isopentenyl-diphosphate delta-isomerase (358 aa).

12 to 13 contacts substrate; it reads RK. Residues 69–71, Ser99, and Asn128 each bind FMN; that span reads AMT. Residue Gln158 coordinates substrate. Position 159 (Glu159) interacts with Mg(2+). FMN-binding positions include Lys190, Thr220, 267–269, and 288–289; these read GIR and AG.

The protein belongs to the IPP isomerase type 2 family. In terms of assembly, homooctamer. Dimer of tetramers. Requires FMN as cofactor. NADPH is required as a cofactor. The cofactor is Mg(2+).

It localises to the cytoplasm. It carries out the reaction isopentenyl diphosphate = dimethylallyl diphosphate. In terms of biological role, involved in the biosynthesis of isoprenoids. Catalyzes the 1,3-allylic rearrangement of the homoallylic substrate isopentenyl (IPP) to its allylic isomer, dimethylallyl diphosphate (DMAPP). The polypeptide is Isopentenyl-diphosphate delta-isomerase (Listeria monocytogenes serotype 4b (strain F2365)).